Consider the following 493-residue polypeptide: Extracellular tyrosine-protein kinase PKDCC (493 aa).

A signal peptide spans 1 to 32 (MRRRRAAVAAGFCASFLLGSVLNVLFAPGSEP). Residues 28 to 128 (PGSEPPRPGQ…PGPGSPGPGP (101 aa)) form a disordered region. Residues 30 to 46 (SEPPRPGQSPEPSPAPG) are compositionally biased toward pro residues. Positions 52-69 (GRGELARQIRARYEEVQR) are enriched in basic and acidic residues. 2 stretches are compositionally biased toward pro residues: residues 95–105 (PGLPRPRPPWA) and 114–127 (GWPPAPGPGSPGPG). N137 carries N-linked (GlcNAc...) asparagine glycosylation. The region spanning 138–493 (VSGAQYMGSG…NKTTYVKASG (356 aa)) is the Protein kinase domain. Residues 144-152 (MGSGYTKAV) and K166 contribute to the ATP site. Y148 bears the Phosphotyrosine mark. Phosphoserine is present on S177. The Proton acceptor role is filled by D278. 5 N-linked (GlcNAc...) asparagine glycosylation sites follow: N320, N369, N400, N460, and N484.

It belongs to the protein kinase superfamily. In terms of processing, N-glycosylated. Phosphorylated on tyrosines; probably via autophosphorylation. Highly expressed in platelets.

It localises to the secreted. The protein localises to the golgi apparatus. The enzyme catalyses L-tyrosyl-[protein] + ATP = O-phospho-L-tyrosyl-[protein] + ADP + H(+). Its function is as follows. Secreted tyrosine-protein kinase that mediates phosphorylation of extracellular proteins and endogenous proteins in the secretory pathway, which is essential for patterning at organogenesis stages. Mediates phosphorylation of MMP1, MMP13, MMP14, MMP19 and ERP29. Probably plays a role in platelets: rapidly and quantitatively secreted from platelets in response to stimulation of platelet degranulation. May also have serine/threonine protein kinase activity. Required for longitudinal bone growth through regulation of chondrocyte differentiation. May be indirectly involved in protein transport from the Golgi apparatus to the plasma membrane. In Homo sapiens (Human), this protein is Extracellular tyrosine-protein kinase PKDCC.